The sequence spans 246 residues: 4-hydroxy-tetrahydrodipicolinate reductase (246 aa).

NAD(+) is bound by residues 8–13 (GAKGRM), 74–76 (GTT), and 101–104 (APNF). H131 serves as the catalytic Proton donor/acceptor. H132 contacts (S)-2,3,4,5-tetrahydrodipicolinate. K135 (proton donor) is an active-site residue. (S)-2,3,4,5-tetrahydrodipicolinate is bound at residue 141 to 142 (GT).

It belongs to the DapB family.

It localises to the cytoplasm. The enzyme catalyses (S)-2,3,4,5-tetrahydrodipicolinate + NAD(+) + H2O = (2S,4S)-4-hydroxy-2,3,4,5-tetrahydrodipicolinate + NADH + H(+). It carries out the reaction (S)-2,3,4,5-tetrahydrodipicolinate + NADP(+) + H2O = (2S,4S)-4-hydroxy-2,3,4,5-tetrahydrodipicolinate + NADPH + H(+). It functions in the pathway amino-acid biosynthesis; L-lysine biosynthesis via DAP pathway; (S)-tetrahydrodipicolinate from L-aspartate: step 4/4. Its function is as follows. Catalyzes the conversion of 4-hydroxy-tetrahydrodipicolinate (HTPA) to tetrahydrodipicolinate. In Cutibacterium acnes (strain DSM 16379 / KPA171202) (Propionibacterium acnes), this protein is 4-hydroxy-tetrahydrodipicolinate reductase.